A 272-amino-acid chain; its full sequence is Ribosomal RNA small subunit methyltransferase J (272 aa).

Residues 120–121 (RD), 136–137 (ER), 171–172 (SS), and Asp-188 contribute to the S-adenosyl-L-methionine site.

Belongs to the methyltransferase superfamily. RsmJ family.

The protein localises to the cytoplasm. It catalyses the reaction guanosine(1516) in 16S rRNA + S-adenosyl-L-methionine = N(2)-methylguanosine(1516) in 16S rRNA + S-adenosyl-L-homocysteine + H(+). Functionally, specifically methylates the guanosine in position 1516 of 16S rRNA. This chain is Ribosomal RNA small subunit methyltransferase J, found in Colwellia psychrerythraea (strain 34H / ATCC BAA-681) (Vibrio psychroerythus).